Reading from the N-terminus, the 226-residue chain is Urease accessory protein UreF (226 aa).

The protein belongs to the UreF family. UreD, UreF and UreG form a complex that acts as a GTP-hydrolysis-dependent molecular chaperone, activating the urease apoprotein by helping to assemble the nickel containing metallocenter of UreC. The UreE protein probably delivers the nickel.

The protein resides in the cytoplasm. Its function is as follows. Required for maturation of urease via the functional incorporation of the urease nickel metallocenter. The chain is Urease accessory protein UreF from Corynebacterium glutamicum (strain R).